A 695-amino-acid polypeptide reads, in one-letter code: Elongation factor G (695 aa).

The tr-type G domain occupies 8–282 (EKTRNIGIMA…AVLDYLPAPT (275 aa)). GTP is bound by residues 17 to 24 (AHIDAGKT), 81 to 85 (DTPGH), and 135 to 138 (NKMD).

The protein belongs to the TRAFAC class translation factor GTPase superfamily. Classic translation factor GTPase family. EF-G/EF-2 subfamily.

The protein resides in the cytoplasm. Catalyzes the GTP-dependent ribosomal translocation step during translation elongation. During this step, the ribosome changes from the pre-translocational (PRE) to the post-translocational (POST) state as the newly formed A-site-bound peptidyl-tRNA and P-site-bound deacylated tRNA move to the P and E sites, respectively. Catalyzes the coordinated movement of the two tRNA molecules, the mRNA and conformational changes in the ribosome. The sequence is that of Elongation factor G from Listeria monocytogenes serotype 4b (strain CLIP80459).